The sequence spans 293 residues: Protease HtpX (293 aa).

2 helical membrane passes run 2–22 (FRILLFLATNIAVVLVASVTL) and 38–58 (LTSLLIFCAVFGMSGAMISLF). His145 serves as a coordination point for Zn(2+). Glu146 is a catalytic residue. Position 149 (His149) interacts with Zn(2+). 2 helical membrane-spanning segments follow: residues 156–176 (VTLALIQGVINTFVMFFARII) and 193–213 (IGFFITTIFAEIVLGILASII). Glu222 contacts Zn(2+).

This sequence belongs to the peptidase M48B family. Requires Zn(2+) as cofactor.

Its subcellular location is the cell inner membrane. This is Protease HtpX from Hahella chejuensis (strain KCTC 2396).